Here is a 181-residue protein sequence, read N- to C-terminus: MSFSDQNLIWVDLEMTGLDPETHKIIEIASIVTDSELNILAEGPVLAVHQPEEELVKMDDWCTNTHTSSGLVERVRNSDVSEQDAVAQTIEFLEKWVPKGVSPICGNSIGQDRRFLYKHMPELEEYFHYRYLDVSTLKELTRRWKPEVLDGFSKQGTHLALDDIRESIAELKYYRETIFKI.

The Exonuclease domain occupies 8 to 171 (LIWVDLEMTG…DDIRESIAEL (164 aa)). Residue tyrosine 129 is part of the active site.

The protein belongs to the oligoribonuclease family.

It is found in the cytoplasm. Its function is as follows. 3'-to-5' exoribonuclease specific for small oligoribonucleotides. In Vibrio campbellii (strain ATCC BAA-1116), this protein is Oligoribonuclease.